The chain runs to 412 residues: Putative phosphate permease PF1020 (412 aa).

10 consecutive transmembrane segments (helical) span residues methionine 7 to isoleucine 27, alanine 50 to threonine 70, valine 88 to threonine 108, serine 119 to tryptophan 139, isoleucine 143 to valine 163, phenylalanine 187 to glycine 207, glycine 213 to leucine 233, tryptophan 298 to valine 318, phenylalanine 335 to isoleucine 355, and aspartate 384 to phenylalanine 404.

This sequence belongs to the inorganic phosphate transporter (PiT) (TC 2.A.20) family.

The protein localises to the cell membrane. In terms of biological role, potential transporter for phosphate. The sequence is that of Putative phosphate permease PF1020 from Pyrococcus furiosus (strain ATCC 43587 / DSM 3638 / JCM 8422 / Vc1).